The chain runs to 417 residues: D-amino acid dehydrogenase (417 aa).

Residue 3–17 participates in FAD binding; sequence VVILGSGVIGVTSAW.

Belongs to the DadA oxidoreductase family. FAD serves as cofactor.

The enzyme catalyses a D-alpha-amino acid + A + H2O = a 2-oxocarboxylate + AH2 + NH4(+). The protein operates within amino-acid degradation; D-alanine degradation; NH(3) and pyruvate from D-alanine: step 1/1. Its function is as follows. Oxidative deamination of D-amino acids. This is D-amino acid dehydrogenase from Edwardsiella ictaluri (strain 93-146).